Reading from the N-terminus, the 657-residue chain is Bifunctional lysine-specific demethylase and histidyl-hydroxylase NO66 (657 aa).

Disordered stretches follow at residues 1 to 141 (MQKA…QTSP) and 165 to 198 (KSCP…NSNE). Polar residues predominate over residues 32–41 (SAKTVDTVTD). Residues 55 to 71 (AEKERRKYLQARVRAEG) are compositionally biased toward basic and acidic residues. Polar residues-rich tracts occupy residues 73–84 (SASTSSKSNATR) and 132–141 (RSQGLEQTSP). A Phosphoserine modification is found at serine 133. Threonine 139 is modified (phosphothreonine). Phosphoserine is present on serine 140. The JmjC domain occupies 315–454 (NPSTYLLGLR…NLLETLMPIV (140 aa)). Residues histidine 355, aspartate 357, and histidine 420 each coordinate Fe cation.

Belongs to the ROX family. NO66 subfamily. It depends on Fe(2+) as a cofactor.

The protein localises to the nucleus. It carries out the reaction N(6),N(6)-dimethyl-L-lysyl(36)-[histone H3] + 2 2-oxoglutarate + 2 O2 = L-lysyl(36)-[histone H3] + 2 formaldehyde + 2 succinate + 2 CO2. Functionally, oxygenase that can act as both a histone lysine demethylase and a ribosomal histidine hydroxylase. Specifically demethylates 'Lys-4' (H3K4me) and 'Lys-36' (H3K36me) of histone H3, thereby playing a central role in histone code. This Drosophila erecta (Fruit fly) protein is Bifunctional lysine-specific demethylase and histidyl-hydroxylase NO66.